The primary structure comprises 395 residues: Tubulin-like protein CetZ1 (395 aa).

GTP contacts are provided by residues 10–14 (QAGGK), 110–112 (GTG), E142, N169, and N187.

It belongs to the CetZ family.

It localises to the cytoplasm. Functionally, involved in cell shape control. Essential for the development of a rod-shaped cell type required for efficient swimming. The polypeptide is Tubulin-like protein CetZ1 (Haloferax volcanii (strain ATCC 29605 / DSM 3757 / JCM 8879 / NBRC 14742 / NCIMB 2012 / VKM B-1768 / DS2) (Halobacterium volcanii)).